The chain runs to 316 residues: MAPFLVLFLAGVVAASRGDREPVYRDCVTLCERNNCTGSRLTDFRAEQPLYMRVTGWTCLDDCRYQCMWYTVSLYLKEGHEVPQFHGKWPFSRFLFFQEPASALASFLNGVASLLMLLRYRSSVPSSCQMYRTCLAFSMVSVNAWFWSTIFHTRDTALTEKMDYFCASSVILHSIYLCCMRTFGLQYPSIANGFGAFLVLLFACHVSYLTLGRFDYSYNMAANTGFGVLNLMWWLAWCFRRRFHQPYLWKCVLVVISLQSLALLELLDFPPVMWILDAHALWHFSTVPLHFLFYSFLKDDSLYLLKINHDDIPKLD.

Positions 1–18 (MAPFLVLFLAGVVAASRG) are cleaved as a signal peptide. The Lumenal segment spans residues 19–93 (DREPVYRDCV…QFHGKWPFSR (75 aa)). N-linked (GlcNAc...) asparagine glycosylation occurs at Asn35. The chain crosses the membrane as a helical span at residues 94 to 114 (FLFFQEPASALASFLNGVASL). The Cytoplasmic portion of the chain corresponds to 115–132 (LMLLRYRSSVPSSCQMYR). A helical membrane pass occupies residues 133 to 153 (TCLAFSMVSVNAWFWSTIFHT). The Lumenal portion of the chain corresponds to 154-163 (RDTALTEKMD). The chain crosses the membrane as a helical span at residues 164 to 180 (YFCASSVILHSIYLCCM). Over 181–182 (RT) the chain is Cytoplasmic. Residues 183 to 203 (FGLQYPSIANGFGAFLVLLFA) form a helical membrane-spanning segment. At 204–218 (CHVSYLTLGRFDYSY) the chain is on the lumenal side. Residues 219–239 (NMAANTGFGVLNLMWWLAWCF) form a helical membrane-spanning segment. At 240 to 251 (RRRFHQPYLWKC) the chain is on the cytoplasmic side. A helical transmembrane segment spans residues 252–272 (VLVVISLQSLALLELLDFPPV). Position 273 (Met273) is a topological domain, lumenal. A helical transmembrane segment spans residues 274-293 (WILDAHALWHFSTVPLHFLF). Over 294-316 (YSFLKDDSLYLLKINHDDIPKLD) the chain is Cytoplasmic.

The protein belongs to the PGAP3 family.

It is found in the golgi apparatus membrane. In terms of biological role, involved in the fatty acid remodeling steps of GPI-anchor maturation where the unsaturated acyl chain at sn-2 of inositol phosphate is replaced by a saturated stearoyl chain. May catalyze the first step of the fatty acid remodeling, by removing the unsaturated acyl chain at sn-2 of inositol phosphate, generating a lyso-GPI intermediate. The fatty acid remodeling steps is critical for the integration of GPI-APs into lipid rafts. This Xenopus tropicalis (Western clawed frog) protein is GPI-specific phospholipase A2-like PGAP3.